The sequence spans 542 residues: Chaperonin GroEL 5 (542 aa).

ATP-binding positions include 30–33 (TLGP), lysine 51, 87–91 (DGTTT), glycine 415, and aspartate 496.

Belongs to the chaperonin (HSP60) family. Forms a cylinder of 14 subunits composed of two heptameric rings stacked back-to-back. Interacts with the co-chaperonin GroES.

Its subcellular location is the cytoplasm. It catalyses the reaction ATP + H2O + a folded polypeptide = ADP + phosphate + an unfolded polypeptide.. Functionally, together with its co-chaperonin GroES, plays an essential role in assisting protein folding. The GroEL-GroES system forms a nano-cage that allows encapsulation of the non-native substrate proteins and provides a physical environment optimized to promote and accelerate protein folding. The protein is Chaperonin GroEL 5 of Rhizobium meliloti (strain 1021) (Ensifer meliloti).